The chain runs to 120 residues: Large ribosomal subunit protein uL18 (120 aa).

The protein belongs to the universal ribosomal protein uL18 family. As to quaternary structure, part of the 50S ribosomal subunit; part of the 5S rRNA/L5/L18/L25 subcomplex. Contacts the 5S and 23S rRNAs.

In terms of biological role, this is one of the proteins that bind and probably mediate the attachment of the 5S RNA into the large ribosomal subunit, where it forms part of the central protuberance. This Rhodospirillum rubrum (strain ATCC 11170 / ATH 1.1.1 / DSM 467 / LMG 4362 / NCIMB 8255 / S1) protein is Large ribosomal subunit protein uL18.